Here is a 26-residue protein sequence, read N- to C-terminus: uncharacterized protein (26 aa).

This is an uncharacterized protein from Archaeoglobus fulgidus (strain ATCC 49558 / DSM 4304 / JCM 9628 / NBRC 100126 / VC-16).